The sequence spans 1110 residues: Error-prone DNA polymerase (1110 aa).

The tract at residues Leu1072 to His1110 is disordered. Basic and acidic residues-rich tracts occupy residues Gly1073–Asp1088 and Pro1097–His1110.

This sequence belongs to the DNA polymerase type-C family. DnaE2 subfamily.

It localises to the cytoplasm. It catalyses the reaction DNA(n) + a 2'-deoxyribonucleoside 5'-triphosphate = DNA(n+1) + diphosphate. Its function is as follows. DNA polymerase involved in damage-induced mutagenesis and translesion synthesis (TLS). It is not the major replicative DNA polymerase. In Rhodopseudomonas palustris (strain BisB5), this protein is Error-prone DNA polymerase.